The chain runs to 363 residues: Peptide chain release factor 1 (363 aa).

At glutamine 237 the chain carries N5-methylglutamine.

Belongs to the prokaryotic/mitochondrial release factor family. In terms of processing, methylated by PrmC. Methylation increases the termination efficiency of RF1.

The protein localises to the cytoplasm. Functionally, peptide chain release factor 1 directs the termination of translation in response to the peptide chain termination codons UAG and UAA. In Mycoplasma capricolum subsp. capricolum (strain California kid / ATCC 27343 / NCTC 10154), this protein is Peptide chain release factor 1 (prfA).